Reading from the N-terminus, the 264-residue chain is MKPTTVSTLRQWKQQGEKFASITAYDFSFARLFADEGIQVMLVGDSLGMVVQGHDSTLPVTLADIVYHTEVVRRGAPAALLLADLPFMSYATPEQTFDSAARLMRAGANMVKLEGGKWLAETVKQLTERAVPVCGHLGLTPQSVNIFGGYKVQGRDAEAADLLLEDALALEAAGMQLLVLECVPVALAKRVTEALSIPVIGIGAGNATDGQILVMHDAFGITGGHIPKFAKNFLAETGDIRAAVRQYVEEVKAGSYPAEQHSFQ.

Mg(2+) is bound by residues D45 and D84. Residues 45–46 (DS), D84, and K112 contribute to the 3-methyl-2-oxobutanoate site. E114 provides a ligand contact to Mg(2+). The Proton acceptor role is filled by E181.

The protein belongs to the PanB family. In terms of assembly, homodecamer; pentamer of dimers. Mg(2+) serves as cofactor.

It is found in the cytoplasm. It carries out the reaction 3-methyl-2-oxobutanoate + (6R)-5,10-methylene-5,6,7,8-tetrahydrofolate + H2O = 2-dehydropantoate + (6S)-5,6,7,8-tetrahydrofolate. It participates in cofactor biosynthesis; (R)-pantothenate biosynthesis; (R)-pantoate from 3-methyl-2-oxobutanoate: step 1/2. Functionally, catalyzes the reversible reaction in which hydroxymethyl group from 5,10-methylenetetrahydrofolate is transferred onto alpha-ketoisovalerate to form ketopantoate. The polypeptide is 3-methyl-2-oxobutanoate hydroxymethyltransferase (Erwinia tasmaniensis (strain DSM 17950 / CFBP 7177 / CIP 109463 / NCPPB 4357 / Et1/99)).